Here is a 335-residue protein sequence, read N- to C-terminus: Aspartate carbamoyltransferase catalytic subunit (335 aa).

Positions 54 and 55 each coordinate carbamoyl phosphate. Residue Lys-82 participates in L-aspartate binding. 3 residues coordinate carbamoyl phosphate: Arg-104, His-134, and Gln-137. The L-aspartate site is built by Arg-177 and Arg-232. Positions 277 and 278 each coordinate carbamoyl phosphate.

The protein belongs to the aspartate/ornithine carbamoyltransferase superfamily. ATCase family. As to quaternary structure, heterododecamer (2C3:3R2) of six catalytic PyrB chains organized as two trimers (C3), and six regulatory PyrI chains organized as three dimers (R2).

It carries out the reaction carbamoyl phosphate + L-aspartate = N-carbamoyl-L-aspartate + phosphate + H(+). It participates in pyrimidine metabolism; UMP biosynthesis via de novo pathway; (S)-dihydroorotate from bicarbonate: step 2/3. In terms of biological role, catalyzes the condensation of carbamoyl phosphate and aspartate to form carbamoyl aspartate and inorganic phosphate, the committed step in the de novo pyrimidine nucleotide biosynthesis pathway. The polypeptide is Aspartate carbamoyltransferase catalytic subunit (Paenarthrobacter aurescens (strain TC1)).